A 151-amino-acid polypeptide reads, in one-letter code: UPF0098 protein MTH_273 (151 aa).

Belongs to the UPF0098 family.

The protein is UPF0098 protein MTH_273 of Methanothermobacter thermautotrophicus (strain ATCC 29096 / DSM 1053 / JCM 10044 / NBRC 100330 / Delta H) (Methanobacterium thermoautotrophicum).